Reading from the N-terminus, the 169-residue chain is Cell division inhibitor SulA (169 aa).

The ftsZ binding stretch occupies residues 106–112 (ALRTGNY). Positions 162–169 (KIHSNLYH) are lon protease binding.

Belongs to the SulA family. In terms of assembly, interacts with FtsZ. In terms of processing, is rapidly cleaved and degraded by the Lon protease once DNA damage is repaired.

Component of the SOS system and an inhibitor of cell division. Accumulation of SulA causes rapid cessation of cell division and the appearance of long, non-septate filaments. In the presence of GTP, binds a polymerization-competent form of FtsZ in a 1:1 ratio, thus inhibiting FtsZ polymerization and therefore preventing it from participating in the assembly of the Z ring. This mechanism prevents the premature segregation of damaged DNA to daughter cells during cell division. The chain is Cell division inhibitor SulA from Shigella boydii serotype 4 (strain Sb227).